The following is a 453-amino-acid chain: Bifunctional protein GlmU (453 aa).

A pyrophosphorylase region spans residues 1-231; the sequence is MERSSLAVIL…EKELTGCNNR (231 aa). Residues 10–13, lysine 24, glutamine 77, 82–83, 105–107, glycine 143, glutamate 157, asparagine 172, and asparagine 229 each bind UDP-N-acetyl-alpha-D-glucosamine; these read LAAG, GT, and YGD. Aspartate 107 is a Mg(2+) binding site. Asparagine 229 serves as a coordination point for Mg(2+). The interval 232-252 is linker; it reads AELAFIERLWQERRRHELMVD. Residues 253-453 are N-acetyltransferase; the sequence is GVSMIAPETV…AQKEAKKKSS (201 aa). 2 residues coordinate UDP-N-acetyl-alpha-D-glucosamine: arginine 318 and lysine 336. Histidine 348 serves as the catalytic Proton acceptor. Tyrosine 351 and asparagine 362 together coordinate UDP-N-acetyl-alpha-D-glucosamine. Acetyl-CoA is bound by residues alanine 365, 371–372, serine 390, serine 408, and arginine 425; that span reads NY.

In the N-terminal section; belongs to the N-acetylglucosamine-1-phosphate uridyltransferase family. The protein in the C-terminal section; belongs to the transferase hexapeptide repeat family. Homotrimer. Mg(2+) is required as a cofactor.

The protein resides in the cytoplasm. The catalysed reaction is alpha-D-glucosamine 1-phosphate + acetyl-CoA = N-acetyl-alpha-D-glucosamine 1-phosphate + CoA + H(+). The enzyme catalyses N-acetyl-alpha-D-glucosamine 1-phosphate + UTP + H(+) = UDP-N-acetyl-alpha-D-glucosamine + diphosphate. It participates in nucleotide-sugar biosynthesis; UDP-N-acetyl-alpha-D-glucosamine biosynthesis; N-acetyl-alpha-D-glucosamine 1-phosphate from alpha-D-glucosamine 6-phosphate (route II): step 2/2. It functions in the pathway nucleotide-sugar biosynthesis; UDP-N-acetyl-alpha-D-glucosamine biosynthesis; UDP-N-acetyl-alpha-D-glucosamine from N-acetyl-alpha-D-glucosamine 1-phosphate: step 1/1. The protein operates within bacterial outer membrane biogenesis; LPS lipid A biosynthesis. Catalyzes the last two sequential reactions in the de novo biosynthetic pathway for UDP-N-acetylglucosamine (UDP-GlcNAc). The C-terminal domain catalyzes the transfer of acetyl group from acetyl coenzyme A to glucosamine-1-phosphate (GlcN-1-P) to produce N-acetylglucosamine-1-phosphate (GlcNAc-1-P), which is converted into UDP-GlcNAc by the transfer of uridine 5-monophosphate (from uridine 5-triphosphate), a reaction catalyzed by the N-terminal domain. The protein is Bifunctional protein GlmU of Agrobacterium fabrum (strain C58 / ATCC 33970) (Agrobacterium tumefaciens (strain C58)).